A 355-amino-acid polypeptide reads, in one-letter code: Homeotic protein knotted-1 (355 aa).

The disordered stretch occupies residues 205-233; it reads KCEGVGSSEEDQDNSGGETELPEIDPRAE. In terms of domain architecture, ELK spans 236 to 256; sequence ELKNHLLRKYSGYLSSLKQEL. The segment at residues 257–320 is a DNA-binding region (homeobox; TALE-type); the sequence is SKKKKKGKLP…NQRKRHWKPS (64 aa).

It belongs to the TALE/KNOX homeobox family. In terms of tissue distribution, expressed in the apical meristems, in the newly emerged lateral primordia in the floral bud, in their vascular bundles and in the cortex parenchyma of the floral pedicle. Also present in the lateral tips of leaf primordia.

It localises to the nucleus. Functionally, appears to be involved in meristem formation and in the regulation of leaf morphology. Misexpression makes the leaf more compound which is always associated with growth retardation and loss of apical dominance, resulting in dwarfed, bushy plants. Probably binds to the DNA sequence 5'-TGAC-3'. The chain is Homeotic protein knotted-1 (KN1) from Solanum lycopersicum (Tomato).